Here is a 498-residue protein sequence, read N- to C-terminus: Putrescine N-hydroxylase (498 aa).

6 residues coordinate FAD: F23, D43, K45, W50, H51, and Q62. The NADP(+) site is built by Q62 and R104. V127 is a binding site for FAD. S207, R231, Y275, and L309 together coordinate NADP(+). Residues N386, P397, and L399 each contribute to the FAD site. Over residues 443–474 (LESNTHSAVTPSKTRQGLNPSAKSVQQPSIEP) the composition is skewed to polar residues. The disordered stretch occupies residues 443 to 498 (LESNTHSAVTPSKTRQGLNPSAKSVQQPSIEPQTALRIAPTGGNVSALMAPNKEAQ).

The protein belongs to the lysine N(6)-hydroxylase/L-ornithine N(5)-oxygenase family. FAD is required as a cofactor.

The enzyme catalyses putrescine + NADPH + O2 = N-hydroxyputrescine + NADP(+) + H2O. It functions in the pathway siderophore biosynthesis. In terms of biological role, N-hydroxylating monooxygenase involved in the biosynthesis of the siderophore putrebactin. Catalyzes the N-hydroxylation of the aliphatic diamine putrescine into N-hydroxyputrescine (NHP). This Shewanella oneidensis (strain ATCC 700550 / JCM 31522 / CIP 106686 / LMG 19005 / NCIMB 14063 / MR-1) protein is Putrescine N-hydroxylase.